The primary structure comprises 49 residues: Large ribosomal subunit protein bL33 (49 aa).

The protein belongs to the bacterial ribosomal protein bL33 family.

The sequence is that of Large ribosomal subunit protein bL33 from Lactiplantibacillus plantarum (strain ATCC BAA-793 / NCIMB 8826 / WCFS1) (Lactobacillus plantarum).